Reading from the N-terminus, the 301-residue chain is GTPase Era (301 aa).

One can recognise an Era-type G domain in the interval K4–P173. A G1 region spans residues G12–S19. G12 to S19 is a binding site for GTP. Positions N38–K42 are G2. The segment at D64 to G67 is G3. GTP-binding positions include D64 to L68 and S122 to D125. Residues S122–D125 are G4. Positions L152–A154 are G5. In terms of domain architecture, KH type-2 spans L204–K280.

Belongs to the TRAFAC class TrmE-Era-EngA-EngB-Septin-like GTPase superfamily. Era GTPase family. In terms of assembly, monomer.

The protein localises to the cytoplasm. Its subcellular location is the cell inner membrane. Its function is as follows. An essential GTPase that binds both GDP and GTP, with rapid nucleotide exchange. Plays a role in 16S rRNA processing and 30S ribosomal subunit biogenesis and possibly also in cell cycle regulation and energy metabolism. In Helicobacter acinonychis (strain Sheeba), this protein is GTPase Era.